The primary structure comprises 340 residues: Sulfotransferase 2B1 (340 aa).

67-72 is a binding site for 3'-phosphoadenylyl sulfate; sequence KSGTNW. Residues W95 and W100 each coordinate substrate. H122 acts as the Proton acceptor in catalysis. Residues R144, S152, Y207, 241–246, and 271–273 contribute to the 3'-phosphoadenylyl sulfate site; these read SAFAAM and RKG. The segment at 301-340 is disordered; it reads LPSFPWDRSAEDGSPDGETEPSPSPSPGLASDDPNPGSSQ.

It belongs to the sulfotransferase 1 family. Isoform 1 is expressed in skin and testis. Higher level of isoform 2 expressed in skin and intestine, moderate level in the kidney, low level in liver, stomach and placenta.

The protein resides in the cytoplasm. The protein localises to the cytosol. Its subcellular location is the microsome. It is found in the nucleus. It catalyses the reaction an alcohol + 3'-phosphoadenylyl sulfate = an alkyl sulfate + adenosine 3',5'-bisphosphate + H(+). The enzyme catalyses pregnenolone + 3'-phosphoadenylyl sulfate = pregnenolone sulfate + adenosine 3',5'-bisphosphate + H(+). The catalysed reaction is 3beta-hydroxyandrost-5-en-17-one + 3'-phosphoadenylyl sulfate = dehydroepiandrosterone 3-sulfate + adenosine 3',5'-bisphosphate + H(+). It carries out the reaction cholesterol + 3'-phosphoadenylyl sulfate = cholesterol sulfate + adenosine 3',5'-bisphosphate + H(+). Sulfotransferase that utilizes 3'-phospho-5'-adenylyl sulfate (PAPS) as sulfonate donor to catalyze the sulfate conjugation. Sulfonation increases the water solubility of most compounds, and therefore their renal excretion, but it can also result in bioactivation to form active metabolites. Sulfonates cholesterol. Catalyzes sulfation of the 3beta-hydroxyl groups of steroids, such as, pregnenolone and dehydroepiandrosterone (DHEA). Conjugates efficiently cholesterol but has a greater affinity for pregnenolone sulfation. Does not show high activity with DHEA. Plays a role in epidermal cholesterol metabolism and in the regulation of epidermal proliferation and differentiation. Functionally, prefers pregnenolone over DHEA as a substrate and does not sulfate cholesterol. The chain is Sulfotransferase 2B1 from Rattus norvegicus (Rat).